The sequence spans 318 residues: Ribosomal RNA small subunit methyltransferase H (318 aa).

S-adenosyl-L-methionine contacts are provided by residues glycine 34–histidine 36, aspartate 53, phenylalanine 82, aspartate 103, and glutamine 110.

It belongs to the methyltransferase superfamily. RsmH family.

The protein resides in the cytoplasm. The enzyme catalyses cytidine(1402) in 16S rRNA + S-adenosyl-L-methionine = N(4)-methylcytidine(1402) in 16S rRNA + S-adenosyl-L-homocysteine + H(+). Specifically methylates the N4 position of cytidine in position 1402 (C1402) of 16S rRNA. The chain is Ribosomal RNA small subunit methyltransferase H from Limosilactobacillus reuteri (strain DSM 20016) (Lactobacillus reuteri).